The sequence spans 741 residues: NAD(P)H-quinone oxidoreductase subunit 5, chloroplastic (741 aa).

The next 16 membrane-spanning stretches (helical) occupy residues 9–29, 39–59, 89–109, 125–145, 147–167, 185–205, 219–239, 258–278, 280–300, 327–347, 354–374, 396–416, 425–445, 542–562, 605–625, and 721–741; these read WVIP…LFFI, IWAF…IQLS, IDPL…LVLI, FVYI…SNLI, IYFF…FWFT, GDFG…SLEF, NGIN…GAVA, TPIS…FLLA, LFPL…VGTI, LGYM…FHLI, ALLF…VGYS, TTFL…CFWS, WLYS…TAFY, LFPL…GISF, AISS…LYGS, and ISSY…FFIS.

This sequence belongs to the complex I subunit 5 family. NDH is composed of at least 16 different subunits, 5 of which are encoded in the nucleus.

It is found in the plastid. The protein localises to the chloroplast thylakoid membrane. The enzyme catalyses a plastoquinone + NADH + (n+1) H(+)(in) = a plastoquinol + NAD(+) + n H(+)(out). It carries out the reaction a plastoquinone + NADPH + (n+1) H(+)(in) = a plastoquinol + NADP(+) + n H(+)(out). In terms of biological role, NDH shuttles electrons from NAD(P)H:plastoquinone, via FMN and iron-sulfur (Fe-S) centers, to quinones in the photosynthetic chain and possibly in a chloroplast respiratory chain. The immediate electron acceptor for the enzyme in this species is believed to be plastoquinone. Couples the redox reaction to proton translocation, and thus conserves the redox energy in a proton gradient. The sequence is that of NAD(P)H-quinone oxidoreductase subunit 5, chloroplastic (ndhF) from Lolium perenne (Perennial ryegrass).